The sequence spans 887 residues: DNA mismatch repair protein MutS (887 aa).

602–609 is an ATP binding site; the sequence is GPNMSGKS.

Belongs to the DNA mismatch repair MutS family.

Its function is as follows. This protein is involved in the repair of mismatches in DNA. It is possible that it carries out the mismatch recognition step. This protein has a weak ATPase activity. This is DNA mismatch repair protein MutS from Staphylococcus saprophyticus subsp. saprophyticus (strain ATCC 15305 / DSM 20229 / NCIMB 8711 / NCTC 7292 / S-41).